Here is a 212-residue protein sequence, read N- to C-terminus: uncharacterized protein (212 aa).

4 consecutive transmembrane segments (helical) span residues 34-54 (IFGI…PAPG), 59-79 (FGVL…ELWL), 126-146 (ILMG…IPGT), and 171-191 (AGMI…YVFF).

This sequence to R.meliloti ExoD.

It is found in the cell membrane. This is an uncharacterized protein from Synechocystis sp. (strain ATCC 27184 / PCC 6803 / Kazusa).